The chain runs to 370 residues: Biotin synthase (370 aa).

Positions 50–276 (FSDGTVDACS…IAVYRFLHPE (227 aa)) constitute a Radical SAM core domain. [4Fe-4S] cluster-binding residues include Cys68, Cys72, and Cys75. Positions 208 and 280 each coordinate [2Fe-2S] cluster. The disordered stretch occupies residues 328–370 (AGLEPNREANTFDPESVKARHRSPAAETASNANRTNATTETDD). A compositionally biased stretch (low complexity) spans 352–370 (AAETASNANRTNATTETDD).

Belongs to the radical SAM superfamily. Biotin synthase family. In terms of assembly, homodimer. The cofactor is [4Fe-4S] cluster. [2Fe-2S] cluster is required as a cofactor.

It catalyses the reaction (4R,5S)-dethiobiotin + (sulfur carrier)-SH + 2 reduced [2Fe-2S]-[ferredoxin] + 2 S-adenosyl-L-methionine = (sulfur carrier)-H + biotin + 2 5'-deoxyadenosine + 2 L-methionine + 2 oxidized [2Fe-2S]-[ferredoxin]. It participates in cofactor biosynthesis; biotin biosynthesis; biotin from 7,8-diaminononanoate: step 2/2. Functionally, catalyzes the conversion of dethiobiotin (DTB) to biotin by the insertion of a sulfur atom into dethiobiotin via a radical-based mechanism. The polypeptide is Biotin synthase (Natronomonas pharaonis (strain ATCC 35678 / DSM 2160 / CIP 103997 / JCM 8858 / NBRC 14720 / NCIMB 2260 / Gabara) (Halobacterium pharaonis)).